We begin with the raw amino-acid sequence, 41 residues long: Large ribosomal subunit protein bL36 (41 aa).

The protein belongs to the bacterial ribosomal protein bL36 family.

The protein is Large ribosomal subunit protein bL36 of Xanthomonas axonopodis pv. citri (strain 306).